A 252-amino-acid polypeptide reads, in one-letter code: Hydroxyacylglutathione hydrolase (252 aa).

Zn(2+) contacts are provided by His54, His56, Asp58, His59, His111, Asp128, and His166.

It belongs to the metallo-beta-lactamase superfamily. Glyoxalase II family. In terms of assembly, monomer. Requires Zn(2+) as cofactor.

The enzyme catalyses an S-(2-hydroxyacyl)glutathione + H2O = a 2-hydroxy carboxylate + glutathione + H(+). Its pathway is secondary metabolite metabolism; methylglyoxal degradation; (R)-lactate from methylglyoxal: step 2/2. Thiolesterase that catalyzes the hydrolysis of S-D-lactoyl-glutathione to form glutathione and D-lactic acid. This chain is Hydroxyacylglutathione hydrolase, found in Aliivibrio fischeri (strain ATCC 700601 / ES114) (Vibrio fischeri).